Consider the following 408-residue polypeptide: GDSL esterase/lipase At1g54790 (408 aa).

Positions 1-24 are cleaved as a signal peptide; sequence MNITKMKLFYVILFFISSLQISNS. Ser38 serves as the catalytic Nucleophile. Asn273, Asn289, and Asn361 each carry an N-linked (GlcNAc...) asparagine glycan. Active-site residues include Asp370 and His373.

Belongs to the 'GDSL' lipolytic enzyme family.

Its subcellular location is the secreted. This chain is GDSL esterase/lipase At1g54790, found in Arabidopsis thaliana (Mouse-ear cress).